Here is a 434-residue protein sequence, read N- to C-terminus: Serine/threonine transporter SstT (434 aa).

The next 9 helical transmembrane spans lie at 14–34 (IVIG…WSFI), 41–61 (FVGA…MSAI), 72–92 (FGTV…AAVA), 135–155 (ALVE…GSGL), 172–192 (TVSA…VGLL), 210–230 (LLML…PFMV), 282–302 (ISIP…VSIM), 316–336 (IFLA…VSGI), and 351–371 (FGIS…IGVV). Positions 414-434 (KGTAEVVTPEKANEAEESEQV) are disordered.

It belongs to the dicarboxylate/amino acid:cation symporter (DAACS) (TC 2.A.23) family.

Its subcellular location is the cell membrane. The enzyme catalyses L-serine(in) + Na(+)(in) = L-serine(out) + Na(+)(out). It catalyses the reaction L-threonine(in) + Na(+)(in) = L-threonine(out) + Na(+)(out). Functionally, involved in the import of serine and threonine into the cell, with the concomitant import of sodium (symport system). This Lacticaseibacillus paracasei (strain ATCC 334 / BCRC 17002 / CCUG 31169 / CIP 107868 / KCTC 3260 / NRRL B-441) (Lactobacillus paracasei) protein is Serine/threonine transporter SstT.